The sequence spans 240 residues: FMN-dependent NADH:quinone oxidoreductase 2 (240 aa).

FMN-binding positions include serine 10 and 23–25; that span reads SIS.

This sequence belongs to the azoreductase type 1 family. In terms of assembly, homodimer. FMN is required as a cofactor.

It carries out the reaction 2 a quinone + NADH + H(+) = 2 a 1,4-benzosemiquinone + NAD(+). The catalysed reaction is N,N-dimethyl-1,4-phenylenediamine + anthranilate + 2 NAD(+) = 2-(4-dimethylaminophenyl)diazenylbenzoate + 2 NADH + 2 H(+). Functionally, quinone reductase that provides resistance to thiol-specific stress caused by electrophilic quinones. Also exhibits azoreductase activity. Catalyzes the reductive cleavage of the azo bond in aromatic azo compounds to the corresponding amines. This Idiomarina loihiensis (strain ATCC BAA-735 / DSM 15497 / L2-TR) protein is FMN-dependent NADH:quinone oxidoreductase 2.